Consider the following 519-residue polypeptide: Sugar transport protein MST5 (519 aa).

Over 1–18 (MAGGAMVQTVGGKTYPGK) the chain is Cytoplasmic. A helical membrane pass occupies residues 19-39 (MTAFVFFTCLVASSGGLIFGY). At 40 to 80 (DIGISGGVTSMDSFLSEFFPSVYAQAKASKDTNQYCKFDSQ) the chain is on the extracellular side. Residues 81–101 (LLTLFTSSLYLAALATSFVAA) form a helical membrane-spanning segment. The Cytoplasmic segment spans residues 102 to 110 (WVTRVFGRK). A helical membrane pass occupies residues 111-127 (WSMFCGGVTFLAGSALN). Position 128 (glycine 128) is a topological domain, extracellular. Residues 129 to 149 (AATDVMMLILGRILLGIGVGF) form a helical membrane-spanning segment. The Cytoplasmic segment spans residues 150–167 (ANQSVPLYLSEMAPANLR). A helical transmembrane segment spans residues 168-188 (GMLNIGFQLMTTIGILSANLI). Topologically, residues 189-202 (NYATSSIEGGWGWR) are extracellular. Residues 203–223 (IGLGLAGVPALIITLGALVLP) traverse the membrane as a helical segment. At 224–295 (DTPNSLIARG…IAILIPCFQQ (72 aa)) the chain is on the cytoplasmic side. Residues 296–316 (LTGINVIMFYAPVLFLTIGFA) traverse the membrane as a helical segment. Residues 317-321 (GDASL) are Extracellular-facing. The chain crosses the membrane as a helical span at residues 322 to 342 (MSAVITGLVNMFATVVSIISV). Over 343 to 357 (DRLGRRVLFLQGGTQ) the chain is Cytoplasmic. Residues 358–378 (MFISQVVVGTLIALQFGVAGV) form a helical membrane-spanning segment. Topologically, residues 379–386 (GEMSRSYA) are extracellular. Residues 387-407 (ILLVLFICMYVAGFAWSWGPL) form a helical membrane-spanning segment. The Cytoplasmic portion of the chain corresponds to 408–426 (GWLVPSEVFALEIRSAGQS). A helical membrane pass occupies residues 427–447 (IAVCVNMMLTFVIGQAFLTML). Residues 448-451 (CHLK) are Extracellular-facing. Residues 452 to 472 (FGLFYFFAGWMLVMTTFVALF) form a helical membrane-spanning segment. Residues 473–519 (LPETKGVPIEEMNHVWSRHWFWGSYVTAHDVAGAGAGGGGNRRSHNV) are Cytoplasmic-facing.

The protein belongs to the major facilitator superfamily. Sugar transporter (TC 2.A.1.1) family. As to expression, expressed in panicles before heading. Expressed in flowers before pollination.

The protein resides in the membrane. In terms of biological role, mediates active uptake of hexoses by sugar:proton symport. Can transport glucose, xylose and 3-O-methylglucose. May play a role at the early stage of seed development. The polypeptide is Sugar transport protein MST5 (Oryza sativa subsp. japonica (Rice)).